Here is a 1737-residue protein sequence, read N- to C-terminus: Intraflagellar transport protein osm-1 (1737 aa).

WD repeat units lie at residues 14-53 (DGEA…KDRF), 63-103 (GKKS…NEKK), 110-150 (VQPS…SLYK), 151-189 (TDET…QSKI), 191-229 (TLQV…QQFD), 233-273 (QSEK…WDEG), and 511-553 (DQRS…EQVT). TPR repeat units lie at residues 700–737 (NDTE…KTSY), 803–836 (SQLY…GKAI), 848–881 (VTLE…KKAV), 907–940 (TGYY…NDAI), 979–1012 (HGRF…DDVL), 1037–1070 (RGDL…SDAY), and 1137–1170 (GTVH…ELAV).

The protein belongs to the IFT172 family. In terms of assembly, component of the IFT complex B composed of at least che-2, che-13, dyf-1, dyf-3, dyf-6, dyf-11, dyf-13, ift-20, ift-74, ift-81, ifta-2, osm-1, osm-5 and osm-6. In terms of tissue distribution, expressed in amphid and phasmid chemosensory neurons, where it appears to concentrate at the base of the transition zones, which correspond to the basal bodies of motile and sensory cilia. Moves in the retrograde direction along cilia and dendrites, suggesting that it is retrieved from the distal endings of the cilia by a retrograde transport pathway that moves it along cilia and then dendrites, back to the neuronal cell body.

It localises to the cell projection. It is found in the cilium. Functionally, component of the intraflagellar transport (IFT) complex B required for transport of proteins in the motile cilium. May be required for ciliary entrance and transport of specific ciliary cargo proteins such as che-3 which are related to motility. Required for the maintenance and formation of chemosensory cilia that detect chemosensory cues. The polypeptide is Intraflagellar transport protein osm-1 (Caenorhabditis elegans).